A 383-amino-acid polypeptide reads, in one-letter code: Pheromone-regulated membrane protein 10 (383 aa).

Residues 1-65 (MIVSFGDATT…ILADTNLYPP (65 aa)) are Cytoplasmic-facing. A helical membrane pass occupies residues 66–86 (WMCVLLYAFCSAMVTPYAFGG). Residue D87 is a topological domain, extracellular. A helical transmembrane segment spans residues 88 to 108 (WVNLAISFFMGLCVGSLQFIL). Residues 109–117 (SQKSYMYSN) lie on the Cytoplasmic side of the membrane. The chain crosses the membrane as a helical span at residues 118–138 (VFEISASIVVSFCGRAFGSIP). At 139-141 (RSH) the chain is on the extracellular side. A helical transmembrane segment spans residues 142–162 (ICFGAVTQGSLALILPGYIIL). At 163-180 (CGALELQSRSLVAGAVRM) the chain is on the cytoplasmic side. A helical membrane pass occupies residues 181–201 (FYAIIYSLFLGFGITLGSALF). At 202–216 (GWMYHNATNEISCPQ) the chain is on the extracellular side. Residues 217–237 (LISPWFRFLFVPAFTISISLL) form a helical membrane-spanning segment. The Cytoplasmic portion of the chain corresponds to 238-241 (NQAH). Residues 242 to 262 (ISQLPVMVFISCTGYVVTYWA) form a helical membrane-spanning segment. The Extracellular portion of the chain corresponds to 263-271 (GKHFANSTE). Residues 272–292 (FTAALAAFVIGVLGNLYSRIW) traverse the membrane as a helical segment. Position 293 (K293) is a topological domain, cytoplasmic. The helical transmembrane segment at 294–314 (GLAVSAMLPAIFVQVPSGIAS) threads the bilayer. Topologically, residues 315–352 (QNSLLSGLQSANTIVNANETITTSTSDPSSSMSFGMTM) are extracellular. A helical transmembrane segment spans residues 353 to 373 (IQVCVGISVGLFASSLFVYPF). Over 374–383 (GKKKTGLFSL) the chain is Cytoplasmic.

The protein belongs to the ThrE exporter (TC 2.A.79) family.

The protein resides in the membrane. The chain is Pheromone-regulated membrane protein 10 (PRM10) from Saccharomyces cerevisiae (strain ATCC 204508 / S288c) (Baker's yeast).